The sequence spans 308 residues: Protoheme IX farnesyltransferase (308 aa).

The next 8 membrane-spanning stretches (helical) occupy residues 20-40, 50-70, 102-122, 124-144, 149-169, 170-190, 227-249, and 288-308; these read LLAY…VTAI, AIHP…ATGA, NALA…WCAT, LLAG…YTLW, TSQN…IGWS, AITG…FFWT, LIYT…WLYG, and YLAV…PTLH.

It belongs to the UbiA prenyltransferase family. Protoheme IX farnesyltransferase subfamily.

The protein resides in the cell membrane. The catalysed reaction is heme b + (2E,6E)-farnesyl diphosphate + H2O = Fe(II)-heme o + diphosphate. It functions in the pathway porphyrin-containing compound metabolism; heme O biosynthesis; heme O from protoheme: step 1/1. Its function is as follows. Converts heme B (protoheme IX) to heme O by substitution of the vinyl group on carbon 2 of heme B porphyrin ring with a hydroxyethyl farnesyl side group. The chain is Protoheme IX farnesyltransferase from Mycobacterium bovis (strain BCG / Pasteur 1173P2).